The following is a 219-amino-acid chain: MEMHLNDMEVRVLGCLIEKELTTPEYYPLTLNALTNACNQKSNRDPVLTREEVEVVRALDSLKFKQLALLSAEGGRVPKYRHTLVEKLRLDPPELAVLAELLLRGPQTVGELRTRGERMHPFPDLAAVEEVLGELMARTPPLVTRLPRQQGRKESRHAHLFAGEPELATAELTPSPEAARLKVMAENERIAKLEEEVAGLRSEVVELRRLVDEFKSQFE.

The protein belongs to the UPF0502 family.

The sequence is that of UPF0502 protein Gura_0277 from Geotalea uraniireducens (strain Rf4) (Geobacter uraniireducens).